The sequence spans 224 residues: UPF0758 protein lwe1562 (224 aa).

An MPN domain is found at 102–224 (VIRCPDDAVK…YISLKEKGYF (123 aa)). Zn(2+) contacts are provided by His-173, His-175, and Asp-186. A JAMM motif motif is present at residues 173-186 (HNHPSGDPTPSSED).

This sequence belongs to the UPF0758 family.

The chain is UPF0758 protein lwe1562 from Listeria welshimeri serovar 6b (strain ATCC 35897 / DSM 20650 / CCUG 15529 / CIP 8149 / NCTC 11857 / SLCC 5334 / V8).